We begin with the raw amino-acid sequence, 565 residues long: CTP synthase (565 aa).

The amidoligase domain stretch occupies residues 1–272; the sequence is MARPKNVKHI…DLRVMKKLGL (272 aa). Ser-18 contacts CTP. Residue Ser-18 participates in UTP binding. Residue 19 to 24 coordinates ATP; it reads SLGKGI. Position 59 (Tyr-59) interacts with L-glutamine. Asp-76 is an ATP binding site. Residues Asp-76 and Glu-146 each coordinate Mg(2+). CTP is bound by residues 153 to 155, 193 to 198, and Lys-229; these read DIE and KTKPTQ. Residues 193-198 and Lys-229 each bind UTP; that span reads KTKPTQ. A Glutamine amidotransferase type-1 domain is found at 299 to 543; sequence TIGVCGKYTE…VAAAKEYEKG (245 aa). Gly-363 contacts L-glutamine. The active-site Nucleophile; for glutamine hydrolysis is Cys-390. Residues 391 to 394, Glu-414, and Arg-471 contribute to the L-glutamine site; that span reads LGMQ. Residues His-516 and Glu-518 contribute to the active site.

This sequence belongs to the CTP synthase family. As to quaternary structure, homotetramer.

The enzyme catalyses UTP + L-glutamine + ATP + H2O = CTP + L-glutamate + ADP + phosphate + 2 H(+). The catalysed reaction is L-glutamine + H2O = L-glutamate + NH4(+). It catalyses the reaction UTP + NH4(+) + ATP = CTP + ADP + phosphate + 2 H(+). The protein operates within pyrimidine metabolism; CTP biosynthesis via de novo pathway; CTP from UDP: step 2/2. Allosterically activated by GTP, when glutamine is the substrate; GTP has no effect on the reaction when ammonia is the substrate. The allosteric effector GTP functions by stabilizing the protein conformation that binds the tetrahedral intermediate(s) formed during glutamine hydrolysis. Inhibited by the product CTP, via allosteric rather than competitive inhibition. Its function is as follows. Catalyzes the ATP-dependent amination of UTP to CTP with either L-glutamine or ammonia as the source of nitrogen. Regulates intracellular CTP levels through interactions with the four ribonucleotide triphosphates. The polypeptide is CTP synthase (Chlorobium phaeobacteroides (strain DSM 266 / SMG 266 / 2430)).